Reading from the N-terminus, the 90-residue chain is Small ribosomal subunit protein uS15 (90 aa).

It belongs to the universal ribosomal protein uS15 family. As to quaternary structure, part of the 30S ribosomal subunit. Forms a bridge to the 50S subunit in the 70S ribosome, contacting the 23S rRNA.

In terms of biological role, one of the primary rRNA binding proteins, it binds directly to 16S rRNA where it helps nucleate assembly of the platform of the 30S subunit by binding and bridging several RNA helices of the 16S rRNA. Functionally, forms an intersubunit bridge (bridge B4) with the 23S rRNA of the 50S subunit in the ribosome. The protein is Small ribosomal subunit protein uS15 of Campylobacter jejuni subsp. jejuni serotype O:6 (strain 81116 / NCTC 11828).